Here is a 215-residue protein sequence, read N- to C-terminus: N-(5'-phosphoribosyl)anthranilate isomerase (215 aa).

It belongs to the TrpF family.

The catalysed reaction is N-(5-phospho-beta-D-ribosyl)anthranilate = 1-(2-carboxyphenylamino)-1-deoxy-D-ribulose 5-phosphate. The protein operates within amino-acid biosynthesis; L-tryptophan biosynthesis; L-tryptophan from chorismate: step 3/5. In Paramagnetospirillum magneticum (strain ATCC 700264 / AMB-1) (Magnetospirillum magneticum), this protein is N-(5'-phosphoribosyl)anthranilate isomerase.